A 241-amino-acid chain; its full sequence is Linker for activation of T-cells family member 1 (241 aa).

Topologically, residues 1–4 (MEAD) are extracellular. A helical; Signal-anchor for type III membrane protein transmembrane segment spans residues 5–28 (ALSPVELGLLLLPFVVMLLAALCV). Residues Cys-27 and Cys-30 are each lipidated (S-palmitoyl cysteine). Topologically, residues 29-241 (RCRELPASYD…PDYENLQELN (213 aa)) are cytoplasmic. 6 positions are modified to phosphoserine: Ser-41, Ser-44, Ser-87, Ser-104, Ser-109, and Ser-112. A disordered region spans residues 78 to 139 (QPDLLPIPRS…DDYPEGYLVV (62 aa)). Polar residues predominate over residues 97–115 (MPSSRQNSDDANSVASYEN). A compositionally biased stretch (acidic residues) spans 124–133 (DEDEDEDDYP). An interaction with PLCG1 region spans residues 136–139 (YLVV). Residue Tyr-175 is modified to Phosphotyrosine. 2 interaction with GRB2, GRAP2 and PIK3R1 regions span residues 175 to 178 (YVNV) and 195 to 198 (YVNV). Phosphoserine is present on residues Ser-199, Ser-212, and Ser-215. The segment at 209-241 (ELASVTSQEVEDEEEEDVDGEEAPDYENLQELN) is disordered. A compositionally biased stretch (acidic residues) spans 217 to 233 (EVEDEEEEDVDGEEAPD). A Phosphotyrosine modification is found at Tyr-234.

In terms of assembly, when phosphorylated, interacts directly with the PIK3R1 subunit of phosphoinositide 3-kinase and the SH2 domains of GRB2, GRAP, GRAP2, PLCG1 and PLCG2. Interacts indirectly with CBL, SOS, VAV, and LCP2. Interacts with SHB, SKAP2 and CLNK. Interacts with FCGR1A. Interacts with GRB2, PLCG1 and THEMIS upon TCR activation in thymocytes. Interacts with THEMIS2. Post-translationally, phosphorylated on tyrosines by ZAP70 upon TCR activation, or by SYK upon other immunoreceptor activation; which leads to the recruitment of multiple signaling molecules. Is one of the most prominently tyrosine-phosphorylated proteins detected following TCR engagement. May be dephosphorylated by PTPRJ. In terms of processing, palmitoylation of Cys-27 and Cys-30 is required for raft targeting and efficient phosphorylation. Phosphorylated on tyrosines by ZAP70 upon TCR activation, or by SYK upon other immunoreceptor activation; which leads to the recruitment of multiple signaling molecules. Is one of the most prominently tyrosine-phosphorylated proteins detected following TCR engagement. May be dephosphorylated by PTPRJ. Phosphorylated by ITK leading to the recruitment of VAV1 to LAT-containing complexes. Post-translationally, 'Lys-63'-linked ubiquitinated by TRAF6. In terms of tissue distribution, expressed in NK cells. Present in lymph node, spleen and thymus (at protein level).

The protein resides in the cell membrane. Functionally, required for TCR (T-cell antigen receptor)- and pre-TCR-mediated signaling, both in mature T-cells and during their development. Involved in FCGR3 (low affinity immunoglobulin gamma Fc region receptor III)-mediated signaling in natural killer cells and FCER1 (high affinity immunoglobulin epsilon receptor)-mediated signaling in mast cells. Couples activation of these receptors and their associated kinases with distal intracellular events such as mobilization of intracellular calcium stores, PKC activation, MAPK activation or cytoskeletal reorganization through the recruitment of PLCG1, GRB2, GRAP2, and other signaling molecules. This chain is Linker for activation of T-cells family member 1 (Lat), found in Rattus norvegicus (Rat).